We begin with the raw amino-acid sequence, 304 residues long: UDP-3-O-acyl-N-acetylglucosamine deacetylase (304 aa).

Zn(2+)-binding residues include H78, H237, and D241. H264 functions as the Proton donor in the catalytic mechanism.

Belongs to the LpxC family. Zn(2+) serves as cofactor.

It catalyses the reaction a UDP-3-O-[(3R)-3-hydroxyacyl]-N-acetyl-alpha-D-glucosamine + H2O = a UDP-3-O-[(3R)-3-hydroxyacyl]-alpha-D-glucosamine + acetate. It participates in glycolipid biosynthesis; lipid IV(A) biosynthesis; lipid IV(A) from (3R)-3-hydroxytetradecanoyl-[acyl-carrier-protein] and UDP-N-acetyl-alpha-D-glucosamine: step 2/6. Catalyzes the hydrolysis of UDP-3-O-myristoyl-N-acetylglucosamine to form UDP-3-O-myristoylglucosamine and acetate, the committed step in lipid A biosynthesis. In Alcanivorax borkumensis (strain ATCC 700651 / DSM 11573 / NCIMB 13689 / SK2), this protein is UDP-3-O-acyl-N-acetylglucosamine deacetylase.